A 70-amino-acid polypeptide reads, in one-letter code: U2-agatoxin-Ao1m (70 aa).

The first 20 residues, 1 to 20 (MRAIISLFLISAMVFSMIQA), serve as a signal peptide directing secretion. The propeptide occupies 21–34 (VPEEXGLQLSEDER). 3 disulfides stabilise this stretch: cysteine 37/cysteine 53, cysteine 44/cysteine 58, and cysteine 52/cysteine 68. Position 69 is a leucine amide (leucine 69).

It belongs to the neurotoxin 01 (U2-agtx) family. As to expression, expressed by the venom gland.

The protein localises to the secreted. Functionally, insect active toxin causing rapid but reversible paralysis in crickets. No activity shown in mammals. Does not show effect on mammalian voltage-gated calcium channels. This Agelena orientalis (Funnel-web spider) protein is U2-agatoxin-Ao1m.